A 431-amino-acid chain; its full sequence is Probable amino-acid ABC transporter periplasmic-binding protein y4oP (431 aa).

The N-terminal stretch at 1 to 25 (MKRRTFTAGLAALPFLGSSLTRAFA) is a signal peptide.

The protein belongs to the bacterial solute-binding protein 1 family.

The protein resides in the periplasm. Its function is as follows. Probably part of the binding-protein-dependent transport system y4oPQRS. This system probably transports a sugar-like molecule. The protein is Probable amino-acid ABC transporter periplasmic-binding protein y4oP of Sinorhizobium fredii (strain NBRC 101917 / NGR234).